A 215-amino-acid chain; its full sequence is MEKKVLLTGFDPFGGETVNPSWEAVKRLNGAAEGPASIVSEQVPTVFYKSLAVLREAIKKHQPDIIICVGQAGGRMQITPERVAINLNEARIPDNEGNQPVGENISQGGPAAYWTGLPIKRIVEEIKKEGIPAAVSYTAGTFVCNHLFYGLMDEITRHHPHIRGGFIHIPYIPEQTLQKSAPSLSLDLVTKALKIAAVTAAAHEDDIETGGGELH.

Catalysis depends on residues Glu81, Cys144, and His168.

It belongs to the peptidase C15 family. As to quaternary structure, homotetramer.

The protein resides in the cytoplasm. It catalyses the reaction Release of an N-terminal pyroglutamyl group from a polypeptide, the second amino acid generally not being Pro.. Functionally, removes 5-oxoproline from various penultimate amino acid residues except L-proline. The protein is Pyrrolidone-carboxylate peptidase of Bacillus velezensis (strain DSM 23117 / BGSC 10A6 / LMG 26770 / FZB42) (Bacillus amyloliquefaciens subsp. plantarum).